Here is a 424-residue protein sequence, read N- to C-terminus: Histidinol dehydrogenase (424 aa).

Tyr-127, Gln-188, and Asn-211 together coordinate NAD(+). Ser-234, Gln-256, and His-259 together coordinate substrate. Residues Gln-256 and His-259 each coordinate Zn(2+). Residues Glu-322 and His-323 each act as proton acceptor in the active site. Substrate is bound by residues His-323, Asp-356, Glu-410, and His-415. Asp-356 serves as a coordination point for Zn(2+). Residue His-415 participates in Zn(2+) binding.

This sequence belongs to the histidinol dehydrogenase family. Zn(2+) serves as cofactor.

The enzyme catalyses L-histidinol + 2 NAD(+) + H2O = L-histidine + 2 NADH + 3 H(+). Its pathway is amino-acid biosynthesis; L-histidine biosynthesis; L-histidine from 5-phospho-alpha-D-ribose 1-diphosphate: step 9/9. Functionally, catalyzes the sequential NAD-dependent oxidations of L-histidinol to L-histidinaldehyde and then to L-histidine. In Methanococcus maripaludis (strain DSM 14266 / JCM 13030 / NBRC 101832 / S2 / LL), this protein is Histidinol dehydrogenase.